A 163-amino-acid chain; its full sequence is Nucleotide-binding protein CJJ81176_0398 (163 aa).

This sequence belongs to the YajQ family.

In terms of biological role, nucleotide-binding protein. This Campylobacter jejuni subsp. jejuni serotype O:23/36 (strain 81-176) protein is Nucleotide-binding protein CJJ81176_0398.